We begin with the raw amino-acid sequence, 310 residues long: Putative S-adenosyl-L-methionine-dependent methyltransferase Mvan_1346 (310 aa).

S-adenosyl-L-methionine is bound by residues D136 and 165–166 (DL).

The protein belongs to the UPF0677 family.

Functionally, exhibits S-adenosyl-L-methionine-dependent methyltransferase activity. The polypeptide is Putative S-adenosyl-L-methionine-dependent methyltransferase Mvan_1346 (Mycolicibacterium vanbaalenii (strain DSM 7251 / JCM 13017 / BCRC 16820 / KCTC 9966 / NRRL B-24157 / PYR-1) (Mycobacterium vanbaalenii)).